We begin with the raw amino-acid sequence, 312 residues long: Putative clathrin assembly protein At2g01920 (312 aa).

Residues 21 to 152 form the ENTH domain; sequence LITATDEKFT…ILYYNKNMIR (132 aa).

The protein localises to the membrane. It localises to the clathrin-coated pit. It is found in the golgi apparatus. The protein resides in the cytoplasmic vesicle. Its subcellular location is the clathrin-coated vesicle. This is Putative clathrin assembly protein At2g01920 from Arabidopsis thaliana (Mouse-ear cress).